We begin with the raw amino-acid sequence, 340 residues long: Uroporphyrinogen decarboxylase (340 aa).

Residues 23–27 (RQAGR), Asp72, Tyr147, Thr202, and His316 each bind substrate.

This sequence belongs to the uroporphyrinogen decarboxylase family. As to quaternary structure, homodimer.

Its subcellular location is the cytoplasm. It carries out the reaction uroporphyrinogen III + 4 H(+) = coproporphyrinogen III + 4 CO2. The protein operates within porphyrin-containing compound metabolism; protoporphyrin-IX biosynthesis; coproporphyrinogen-III from 5-aminolevulinate: step 4/4. Functionally, catalyzes the decarboxylation of four acetate groups of uroporphyrinogen-III to yield coproporphyrinogen-III. The chain is Uroporphyrinogen decarboxylase from Geobacter sulfurreducens (strain ATCC 51573 / DSM 12127 / PCA).